A 361-amino-acid polypeptide reads, in one-letter code: Prostaglandin E2 receptor EP2 subtype (361 aa).

Over residues 1–10 the composition is skewed to polar residues; it reads MGSISNNSGS. The segment at 1 to 21 is disordered; that stretch reads MGSISNNSGSEDCESREWLPS. The Extracellular portion of the chain corresponds to 1-23; it reads MGSISNNSGSEDCESREWLPSGE. Asparagine 6 carries N-linked (GlcNAc...) asparagine glycosylation. A helical membrane pass occupies residues 24-47; that stretch reads SPAISSAMFSAGVLGNLIALALLA. The Cytoplasmic segment spans residues 48–65; sequence RRWRGDAGRRAGRGNSIS. The helical transmembrane segment at 66–91 threads the bilayer; it reads LFHVLVTELVFTDLLGTCLISPVVLA. The Extracellular segment spans residues 92-111; sequence SYARNQTLMALEPERRACTY. Asparagine 96 carries an N-linked (GlcNAc...) asparagine glycan. Cysteine 109 and cysteine 187 form a disulfide bridge. The chain crosses the membrane as a helical span at residues 112–132; that stretch reads FAFAMTFFSLATMLMLFAMAL. Topologically, residues 133–151 are cytoplasmic; it reads ERYLSIGRPYFYQRHVTRR. The helical transmembrane segment at 152 to 176 threads the bilayer; it reads GGLAVLPTIYTVSLLFCSLPLLGYG. The Extracellular segment spans residues 177–198; sequence QYVQYCPGTWCFIRHGRTAYLQ. Residues 199 to 223 form a helical membrane-spanning segment; the sequence is LYATLLLLLIVAVLACNFSVILNLI. Residues 224 to 262 are Cytoplasmic-facing; it reads RMHRRSGRSRCGPSLGSCRDGSGTRRRGERVSVAEETDH. The disordered stretch occupies residues 230–253; the sequence is GRSRCGPSLGSCRDGSGTRRRGER. The helical transmembrane segment at 263–286 threads the bilayer; it reads LILLAIMTITFAICSLPFTIFAYM. Asparagine 287 carries N-linked (GlcNAc...) asparagine glycosylation. The Extracellular portion of the chain corresponds to 287–299; that stretch reads NETSSRREKWDLQ. A helical transmembrane segment spans residues 300-323; sequence ALRFLSINSIIDPWVFAIFRPPVL. Residues 324–361 lie on the Cytoplasmic side of the membrane; sequence RLMRSVLCCRVSLRAQDATQTSCSIQSNASRLTFVDTS.

The protein belongs to the G-protein coupled receptor 1 family.

It localises to the cell membrane. Functionally, receptor for prostaglandin E2 (PGE2). The activity of this receptor is mediated by G(s) proteins that stimulate adenylate cyclase. The subsequent raise in intracellular cAMP is responsible for the relaxing effect of this receptor on smooth muscle. The chain is Prostaglandin E2 receptor EP2 subtype (PTGER2) from Canis lupus familiaris (Dog).